Reading from the N-terminus, the 652-residue chain is Epithelial sodium channel subunit gamma (652 aa).

Residues 1–54 (MAPGEKIKAKIKKNLPVTGPQAPNIKELMQWYCLNTNTHGCRRIVVSRGRLRRL) are Cytoplasmic-facing. A helical membrane pass occupies residues 55–75 (LWILFTLTAVALIFWQCALLI). Residues 76–537 (SSFYTVSVSI…EQLLSNIGGQ (462 aa)) are Extracellular-facing. 8 disulfide bridges follow: Cys-100/Cys-286, Cys-210/Cys-217, Cys-263/Cys-270, Cys-375/Cys-460, Cys-397/Cys-456, Cys-401/Cys-452, Cys-410/Cys-437, and Cys-412/Cys-426. The gating release of inhibition by proteolysis (GRIP); protease-sensitive region that is responsible for the proteolytic activation of the channel stretch occupies residues 137–224 (RKRREAQSWS…SDCAVYTFSS (88 aa)). N-linked (GlcNAc...) asparagine glycosylation is present at Asn-212. Asn-500 carries an N-linked (GlcNAc...) asparagine glycan. A helical membrane pass occupies residues 538–558 (LGLWMSCSVVCVIEIIEVFFI). Topologically, residues 559–652 (DSLSIIARHQ…LTDTQTTFPH (94 aa)) are cytoplasmic. The tract at residues 610-631 (SALSLPPAPGSQVPGTPPPRYN) is disordered. The short motif at 626-630 (PPPRY) is the PY motif; recruits WW domain-containing proteins and is thereby required for ubiquitination and inhibition of the channel by NEDD4 and NEDD4L element.

It belongs to the amiloride-sensitive sodium channel (TC 1.A.6) family. SCNN1G subfamily. In terms of assembly, component of the heterotrimeric epithelial sodium channel (ENaC) composed of an alpha/SCNN1A, a beta/SCNN1B and a gamma/SCNN1G subunit. An additional delta/SCNN1D subunit can replace the alpha/SCNN1A subunit to form an alternative channel with specific properties. Interacts with WWP1 (via WW domains). Interacts with WWP2 (via WW domains); inhibits the channel. Interacts with the full-length immature form of PCSK9 (pro-PCSK9); inhibits ENaC by promoting its proteasomal degradation. Interacts with BPIFA1; the interaction is indirect via SCNN1B and inhibits the proteolytic maturation of SCNN1A and SCNN1G and the activation of ENaC. In terms of processing, phosphorylated on serine and threonine residues. Aldosterone and insulin increase the basal level of phosphorylation. Ubiquitinated. Can be ubiquitinated at multiple sites and undergo monoubiquitination and polyubiquitination. Ubiquitination by NEDD4 or NEDD4L inhibits the ENaC channel through endocytosis, intracellular retention and degradation of its individual subunits. Post-translationally, ENaC is activated through the proteolytic maturation of its subunits. Furin cleaves the SCNN1G subunit first, followed by cleavage by prostasin (PRSS8), which results in a stepwise increase in the open probability of the channel due to the release of an inhibitory tract. BPIFA1, which is recruited by the SCNN1B subunit, prevents the proteolytic activation of ENaC. In terms of processing, N-glycosylated. N-linked glycans are processed to complex type during ENaC complex assembly and transport to the plasma membrane.

Its subcellular location is the apical cell membrane. It catalyses the reaction Na(+)(in) = Na(+)(out). With respect to regulation, originally identified and characterized by its inhibition by the diuretic drug amiloride. Functionally, this is one of the three pore-forming subunits of the heterotrimeric epithelial sodium channel (ENaC), a critical regulator of sodium balance and fluid homeostasis. ENaC operates in epithelial tissues, where it mediates the electrodiffusion of sodium ions from extracellular fluid through the apical membrane of cells, with water following osmotically. It plays a key role in maintaining sodium homeostasis through electrogenic sodium reabsorption in the kidneys. Additionally, ENaC is essential for airway surface liquid homeostasis, which is crucial for proper mucus clearance. The polypeptide is Epithelial sodium channel subunit gamma (Bos taurus (Bovine)).